Here is a 512-residue protein sequence, read N- to C-terminus: ATP synthase subunit alpha (512 aa).

Glycine 169–threonine 176 provides a ligand contact to ATP.

It belongs to the ATPase alpha/beta chains family. As to quaternary structure, F-type ATPases have 2 components, CF(1) - the catalytic core - and CF(0) - the membrane proton channel. CF(1) has five subunits: alpha(3), beta(3), gamma(1), delta(1), epsilon(1). CF(0) has three main subunits: a(1), b(2) and c(9-12). The alpha and beta chains form an alternating ring which encloses part of the gamma chain. CF(1) is attached to CF(0) by a central stalk formed by the gamma and epsilon chains, while a peripheral stalk is formed by the delta and b chains.

Its subcellular location is the cell inner membrane. The enzyme catalyses ATP + H2O + 4 H(+)(in) = ADP + phosphate + 5 H(+)(out). Its function is as follows. Produces ATP from ADP in the presence of a proton gradient across the membrane. The alpha chain is a regulatory subunit. This is ATP synthase subunit alpha from Orientia tsutsugamushi (strain Ikeda) (Rickettsia tsutsugamushi).